Reading from the N-terminus, the 302-residue chain is Deoxyhypusine hydroxylase (302 aa).

Methionine 1 is modified (N-acetylmethionine). HEAT-like PBS-type repeat units follow at residues 54–80 (LKHE…VLQD), 87–113 (VRHE…YSTD), 175–201 (ERYR…GLKC), 206–232 (FRHE…TLAR), and 239–265 (VRHE…YITD). Residues histidine 56, histidine 89, and glutamate 90 each coordinate Fe cation. 3 residues coordinate Fe cation: histidine 208, histidine 241, and glutamate 242.

The protein belongs to the deoxyhypusine hydroxylase family. The cofactor is Fe(2+).

It carries out the reaction [eIF5A protein]-deoxyhypusine + AH2 + O2 = [eIF5A protein]-hypusine + A + H2O. The protein operates within protein modification; eIF5A hypusination. In terms of biological role, catalyzes the hydroxylation of the N(6)-(4-aminobutyl)-L-lysine intermediate produced by deoxyhypusine synthase/DHPS on a critical lysine of the eukaryotic translation initiation factor 5A/eIF-5A. This is the second step of the post-translational modification of that lysine into an unusual amino acid residue named hypusine. Hypusination is unique to mature eIF-5A factor and is essential for its function. This Rattus norvegicus (Rat) protein is Deoxyhypusine hydroxylase (Dohh).